Consider the following 325-residue polypeptide: Anthranilate phosphoribosyltransferase (325 aa).

5-phospho-alpha-D-ribose 1-diphosphate-binding positions include glycine 73, 76–77, threonine 81, 83–86, 100–108, and serine 112; these read GD, NIST, and KHGNVSITS. Glycine 73 is an anthranilate binding site. Serine 85 contributes to the Mg(2+) binding site. Asparagine 103 contacts anthranilate. Position 158 (arginine 158) interacts with anthranilate. Residues aspartate 216 and glutamate 217 each contribute to the Mg(2+) site.

The protein belongs to the anthranilate phosphoribosyltransferase family. Homodimer. It depends on Mg(2+) as a cofactor.

The catalysed reaction is N-(5-phospho-beta-D-ribosyl)anthranilate + diphosphate = 5-phospho-alpha-D-ribose 1-diphosphate + anthranilate. Its pathway is amino-acid biosynthesis; L-tryptophan biosynthesis; L-tryptophan from chorismate: step 2/5. In terms of biological role, catalyzes the transfer of the phosphoribosyl group of 5-phosphorylribose-1-pyrophosphate (PRPP) to anthranilate to yield N-(5'-phosphoribosyl)-anthranilate (PRA). This is Anthranilate phosphoribosyltransferase from Methanococcus aeolicus (strain ATCC BAA-1280 / DSM 17508 / OCM 812 / Nankai-3).